Consider the following 202-residue polypeptide: CASP-like protein 2B1 (202 aa).

Residues 1 to 29 (MSYLGVGVSPGNVPVYHGTNSKVIDRRVR) are Cytoplasmic-facing. A helical transmembrane segment spans residues 30-50 (LAELVLRCVICCLGVLAAVLV). Over 51 to 72 (GTDTQVKEIFSIQKKARFTDMK) the chain is Extracellular. Residues 73-93 (ALVFLVAANGIAAAYSFVQGV) form a helical membrane-spanning segment. Over 94–109 (RCVVGMVKGSVLFSKP) the chain is Cytoplasmic. A helical transmembrane segment spans residues 110–132 (LAWVIFSGDQMMAYLTMSAVAAA). Over 133–164 (AQSSVFAKLGQPDLQWMKICTMYGKFCNQVGE) the chain is Extracellular. The chain crosses the membrane as a helical span at residues 165–185 (GIASALLVSVSMVVLSCISAF). Over 186-202 (SLFRLYGGNKGKDGARW) the chain is Cytoplasmic.

The protein belongs to the Casparian strip membrane proteins (CASP) family. Homodimer and heterodimers.

It localises to the cell membrane. In Populus trichocarpa (Western balsam poplar), this protein is CASP-like protein 2B1.